The sequence spans 1615 residues: Ras-responsive element-binding protein 1 (1615 aa).

The segment at 1-44 (MMSAVMNVGKIAENGGTSQTVKSPSKSPAPNRIGRRNQETKEEK) is disordered. The span at 15–28 (GGTSQTVKSPSKSP) shows a compositional bias: polar residues. 3 C2H2-type zinc fingers span residues 47-69 (YTCP…IRQH), 78-100 (HSCS…MLVH), and 106-128 (YKCS…MKIH). Residues 127-169 (IHEKDPNSTASTTPPSPLKAKRLSSKRKFSQDAEMDREERTPA) form a disordered region. The span at 145–154 (KAKRLSSKRK) shows a compositional bias: basic residues. 3 C2H2-type zinc fingers span residues 189-211 (YHCP…METH), 216-239 (LRCD…AVIH), and 297-319 (FICE…TETH). Residues 511 to 556 (SAQQASPGCISPSLPPPPLRLIKNSVETSSNSHLSQPGAKSSPSSQ) form a disordered region. A compositionally biased stretch (polar residues) spans 535 to 549 (SVETSSNSHLSQPGA). C2H2-type zinc fingers lie at residues 622 to 644 (YPCR…IRSH), 650 to 672 (YQCN…LRTH), 732 to 754 (TVCK…MRTH), and 763 to 788 (FECK…QHLH). Disordered regions lie at residues 1025–1044 (AADA…KSGN), 1058–1104 (DSNL…VDLE), and 1123–1162 (KFSP…KRNT). The span at 1026 to 1036 (ADASPKAASSS) shows a compositional bias: low complexity. Residues 1082–1095 (TKKRGRKKGTKNKP) show a composition bias toward basic residues. Residues 1123 to 1132 (KFSPFLQSTD) are compositionally biased toward polar residues. The segment at 1170–1192 (ITCPYCPRVFSWASSLQRHMLTH) adopts a C2H2-type 11 zinc-finger fold. 2 disordered regions span residues 1214–1269 (CEKE…KSLD) and 1313–1418 (LSRH…DKRK). The segment covering 1242-1262 (PAEEDAEEKADEYEEGPEEDS) has biased composition (acidic residues). A C2H2-type 12 zinc finger spans residues 1298–1320 (HACDVCGKTFKFAGALSRHKKAH). 2 stretches are compositionally biased toward basic and acidic residues: residues 1321–1339 (IRED…KSIQ) and 1388–1414 (GTER…TAKA). 2 C2H2-type zinc fingers span residues 1419–1441 (KVCT…MRSH) and 1447–1469 (YKCQ…QRIH). Residues 1464–1477 (RHQRIHQKVKNTRN) show a composition bias toward basic residues. A disordered region spans residues 1464–1585 (RHQRIHQKVK…SELERPSGFI (122 aa)). 2 stretches are compositionally biased toward basic and acidic residues: residues 1478–1493 (HGKE…RCGE) and 1566–1580 (PAKD…ELER).

The protein belongs to the krueppel C2H2-type zinc-finger protein family. In terms of tissue distribution, broadly expressed, except in brain.

It localises to the nucleus. In terms of biological role, transcription factor that binds specifically to the RAS-responsive elements (RRE) of gene promoters. This Gallus gallus (Chicken) protein is Ras-responsive element-binding protein 1 (RREB1).